A 41-amino-acid chain; its full sequence is Perlinhibin (41 aa).

In terms of processing, contains four disulfide bonds.

Binds to calcite crystals in the shell and inhibits further shell growth at the binding site. This is Perlinhibin from Haliotis laevigata (Smooth Australian abalone).